A 148-amino-acid chain; its full sequence is Histone H2B.1 (148 aa).

Residues Met-1–Pro-35 show a composition bias toward basic and acidic residues. The interval Met-1–Lys-56 is disordered. Ala-2 is modified (n,N,N-trimethylalanine; alternate). At Ala-2 the chain carries N,N-dimethylalanine; alternate. N-methylalanine; alternate is present on Ala-2. N6-acetyllysine; partial is present on Lys-7. An N6-acetyllysine modification is found at Lys-12. Lys-13 is subject to N6,N6-dimethyllysine. Residues Lys-28, Lys-33, and Lys-39 each carry the N6-acetyllysine modification. Lys-40 bears the N6-acetyllysine; partial mark. Lys-144 participates in a covalent cross-link: Glycyl lysine isopeptide (Lys-Gly) (interchain with G-Cter in ubiquitin).

Belongs to the histone H2B family. In terms of assembly, the nucleosome is a histone octamer containing two molecules each of H2A, H2B, H3 and H4 assembled in one H3-H4 heterotetramer and two H2A-H2B heterodimers. The octamer wraps approximately 147 bp of DNA. Interacts with AHL27. In terms of processing, can be acetylated to form H2BK6ac, H2BK33ac and H2BK34ac. Mono-, di- or trimethylated at the N-terminus to form H2BA1me1/2/3. H2BA1me2 may be acetylated to form H2BA1me2K6ac. Post-translationally, monoubiquitinated by BRE1 to form H2BK143ub1 and deubiquitinated by UBP26. Required for heterochromatic histone H3 di- and trimethylation at H3K4me. May give a specific tag for epigenetic transcriptional activation.

It is found in the nucleus. Its subcellular location is the chromosome. Its function is as follows. Core component of nucleosome. Nucleosomes wrap and compact DNA into chromatin, limiting DNA accessibility to the cellular machineries which require DNA as a template. Histones thereby play a central role in transcription regulation, DNA repair, DNA replication and chromosomal stability. DNA accessibility is regulated via a complex set of post-translational modifications of histones, also called histone code, and nucleosome remodeling. This is Histone H2B.1 from Arabidopsis thaliana (Mouse-ear cress).